The chain runs to 938 residues: MANSMNGRNPGGRGGNPRKGRILGIIDAIQDAVGPPKQAAADRRTVEKTWKLMDKVVRLCQNPKLQLKNSPPYILDILPDTYQHLRLILSKYDDNQKLAQLSENEYFKIYIDSLMKKSKRAIRLFKEGKERMYEEQSQDRRNLTKLSLIFSHMLAEIKAIFPNGQFQGDNFRITKADAAEFWRKFFGDKTIVPWKVFRQCLHEVHQISSGLEAMALKSTIDLTCNDYISVFEFDIFTRLFQPWGSILRNWNFLAVTHPGYMAFLTYDEVKARLQKYSTKPGSYIFRLSCTRLGQWAIGYVTGDGNILQTIPHNKPLFQALIDGSREGFYLYPDGRSYNPDLTGLCEPTPHDHIKVTQEQYELYCEMGSTFQLCKICAENDKDVKIEPCGHLMCTSCLTAWQESDGQGCPFCRCEIKGTEPIIVDPFDPRDEGSRCCSIIDPFSIPMLDLDDDDDREESLMMNRLASVRKCTDRQNSPVTSPGSSPLAQRRKPQPDPLQIPHLSLPPVPPRLDLIQKGIVRSPCGSPTGSPKSSPCMVRKQDKPLPAPPPPLRDPPPPPERPPPIPPDSRLSRHFHHGESVPSRDQPMPLEAWCPRDAFGTNQVMGCRILGDGSPKPGVTANSNLNGRHSRMGSDQVLMRKHRRHDLPSEGAKVFSNGHLAPEEYDVPPRLSPPPPVTALLPSIKCTGPIANCLSEKTRDTVEEDDDEYKIPSSHPVSLNSQPSHCHNVKPPVRSCDNGHCILNGTHGTPSEMKKSNIPDLGIYLKGEDAFDALPPSLPPPPPPARHSLIEHSKPPGSSSRPSSGQDLFLLPSDPFFDPASGQVPLPPARRAPGDGVKSNRASQDYDQLPSSSDGSQAPARPPKPRPRRTAPEIHHRKPHGPEAALENVDAKIAKLMGEGYAFEEVKRALEIAQNNLEVARSILREFAFPPPVSPRLNL.

A 4H region spans residues 35–167 (PPKQAAADRR…KAIFPNGQFQ (133 aa)). A Cbl-PTB domain is found at 35–343 (PPKQAAADRR…GRSYNPDLTG (309 aa)). The tract at residues 168 to 240 (GDNFRITKAD…FEFDIFTRLF (73 aa)) is EF-hand-like. Ca(2+) contacts are provided by Asp-221, Thr-223, Asn-225, Tyr-227, and Glu-232. The segment at 241 to 343 (QPWGSILRNW…GRSYNPDLTG (103 aa)) is SH2-like. Position 282 is a phosphoserine; by PKC/PRKCQ (Ser-282). Residue Arg-286 coordinates 4-O-phospho-L-tyrosine. The tract at residues 344 to 372 (LCEPTPHDHIKVTQEQYELYCEMGSTFQL) is linker. Position 363 is a phosphotyrosine (Tyr-363). The RING-type zinc-finger motif lies at 373–412 (CKICAENDKDVKIEPCGHLMCTSCLTAWQESDGQGCPFCR). The tract at residues 465–588 (ASVRKCTDRQ…SVPSRDQPMP (124 aa)) is disordered. The segment covering 473-486 (RQNSPVTSPGSSPL) has biased composition (polar residues). Phosphoserine occurs at positions 476, 480, 484, 521, 525, and 529. Residues 543 to 567 (PLPAPPPPLRDPPPPPERPPPIPPD) are interaction with VAV1. Over residues 544-566 (LPAPPPPLRDPPPPPERPPPIPP) the composition is skewed to pro residues. A Phosphoserine modification is found at Ser-633. Tyr-664 and Tyr-708 each carry phosphotyrosine. Disordered stretches follow at residues 702–725 (EEDD…PSHC) and 771–885 (DALP…EAAL). Polar residues predominate over residues 714-724 (HPVSLNSQPSH). Over residues 775–784 (PSLPPPPPPA) the composition is skewed to pro residues. Over residues 794–804 (PPGSSSRPSSG) the composition is skewed to low complexity. Polar residues predominate over residues 839–855 (NRASQDYDQLPSSSDGS). At Tyr-845 the chain carries Phosphotyrosine. An interaction with SH3KBP1 region spans residues 847-883 (QLPSSSDGSQAPARPPKPRPRRTAPEIHHRKPHGPEA). A compositionally biased stretch (basic residues) spans 862–878 (PKPRPRRTAPEIHHRKP). Residues 887–926 (NVDAKIAKLMGEGYAFEEVKRALEIAQNNLEVARSILREF) enclose the UBA domain.

Interacts with SH3 domain-containing proteins LCK, CRK and SORBS1. Interacts with LCP2 and ZAP70. Interacts with CBL. Interacts with SH3 domain-containing proteins VAV1, FYN, FGR, PLCG1, GRB2, CRKL, PIK3R1 and SH3KBP1/CIN85. Identified in heterotrimeric complexes with SH3KBP1/CIN85, CD2AP and ARHGEF7, where one CBLB peptide binds two copies of the other protein. Interacts with poly-ubiquitinated proteins. Dimerization is required for the binding of poly-ubiquitin, but not for the binding of mono-ubiquitin. Interacts with EGFR (phosphorylated). Interacts with IFT20. In terms of processing, phosphorylated on tyrosine and serine residues upon TCR or BCR activation, and upon various types of cell stimulation. Post-translationally, auto-ubiquitinated upon EGF-mediated cell activation or upon T-cell costimulation by CD28; which promotes proteasomal degradation.

Its subcellular location is the cytoplasm. It carries out the reaction S-ubiquitinyl-[E2 ubiquitin-conjugating enzyme]-L-cysteine + [acceptor protein]-L-lysine = [E2 ubiquitin-conjugating enzyme]-L-cysteine + N(6)-ubiquitinyl-[acceptor protein]-L-lysine.. It functions in the pathway protein modification; protein ubiquitination. Functionally, E3 ubiquitin-protein ligase which accepts ubiquitin from specific E2 ubiquitin-conjugating enzymes, and transfers it to substrates, generally promoting their degradation by the proteasome. Negatively regulates TCR (T-cell receptor), BCR (B-cell receptor) and FCER1 (high affinity immunoglobulin epsilon receptor) signal transduction pathways. In naive T-cells, inhibits VAV1 activation upon TCR engagement and imposes a requirement for CD28 costimulation for proliferation and IL-2 production. Also acts by promoting PIK3R1/p85 ubiquitination, which impairs its recruitment to the TCR and subsequent activation. In activated T-cells, inhibits PLCG1 activation and calcium mobilization upon restimulation and promotes anergy. In B-cells, acts by ubiquitinating SYK and promoting its proteasomal degradation. Slightly promotes SRC ubiquitination. May be involved in EGFR ubiquitination and internalization. May be functionally coupled with the E2 ubiquitin-protein ligase UB2D3. In association with CBL, required for proper feedback inhibition of ciliary platelet-derived growth factor receptor-alpha (PDGFRA) signaling pathway via ubiquitination and internalization of PDGFRA. The protein is E3 ubiquitin-protein ligase CBL-B (Cblb) of Rattus norvegicus (Rat).